Consider the following 209-residue polypeptide: MAEFSLDKSHIAGVVLAGGRSQRMGRDKAGVMLGAESLLRHALTRLSQQALHVAVNADAAAEDVPVVPDRFPGKAGPMAGIHAAMVYAADLPSITHVVTVSVDCPFFPADLVARLAAAIEHPSQIAIAASEGRSHPVFGLWPVTLAADLEAWIATDEKRRVRDFLLRHDVTEVAFPLHPTRASLLDPFFNINTPDDLVEAERWLEALRA.

GTP-binding positions include 16 to 18 (LAG), lysine 28, asparagine 56, aspartate 69, and aspartate 103. Aspartate 103 serves as a coordination point for Mg(2+).

The protein belongs to the MobA family. As to quaternary structure, monomer. Mg(2+) serves as cofactor.

Its subcellular location is the cytoplasm. The catalysed reaction is Mo-molybdopterin + GTP + H(+) = Mo-molybdopterin guanine dinucleotide + diphosphate. Its function is as follows. Transfers a GMP moiety from GTP to Mo-molybdopterin (Mo-MPT) cofactor (Moco or molybdenum cofactor) to form Mo-molybdopterin guanine dinucleotide (Mo-MGD) cofactor. This Rhizobium johnstonii (strain DSM 114642 / LMG 32736 / 3841) (Rhizobium leguminosarum bv. viciae) protein is Molybdenum cofactor guanylyltransferase.